Reading from the N-terminus, the 811-residue chain is MSDQPPPYTPLPLLSSFPPNPYPDQTPDPASTPTLVLPNPAFPNKRKRTGFRRKLPSGSPAAPVAVAASPSAQPPPRASAADDIIVINREPTAEAVTALTAGFPADSLTDEEIEAGVVSDVGGIEQVNYILIRNHLLTRWRETFNSWLAKESFATLIPPHCDHLLNAAYSFLVSHGHINFGVAPAIKERIPKEPTRHNTVIVVGAGLAGLAAARQLVAFGFKVVVLEGRKRCGGRVYTKKMEGGGRSAAGDLGGSVLTGTFGNPLGIVAKQLGLPMHKIRDKCPLYRPDGSPVDPEVDKKVEGTFNKLLDKSSLLRASMGDVAMDVSLGAALETLRQTDGDLSTDQEMNLFNWHLANLEYANAGLLSKLSLAFWDQDDPYDMGGDHCFLPGGNGRLVQALAENVPIVYERTVHTIRNGGDGVQVVVNGGQVYEGDMALCTVPLGVLKNGGVKFVPELPQRKLDSIKRLGFGLLNKVAMLFPHVFWSTDLDTFGHLTEDPSHRGEFFLFYSYATVAGGPLLMALVAGEAAHNFETTPPTDAVSSVLKILRGIYEPQGIEVPDPLQSVCTRWGTDSFSLGSYSHVAVGASGDDYDILAESVGDGRLFFAGEATTRRYPATMHGAFISGLREAANITLHANARAAKSKVEKGPSTNTQACAALLMDLFRQPDLEFGSFSVIFGGQASDPKSPAILKVELGGPRKKGATEGGKADQHHSNKLLFQQLQSHFNQQQQLYVYTLLSRQQAMELREVRGGDEMRLHYLCEKLGVKLVGRKGLGPGADAVIASIKAERNSSRTKTRPSKLKIGIPKSKS.

A compositionally biased stretch (pro residues) spans Met-1–Pro-10. Residues Met-1–Ser-79 form a disordered region. Positions Asn-44–Leu-55 are enriched in basic residues. The segment covering Pro-56 to Ser-71 has biased composition (low complexity). The SWIRM domain maps to Asn-88–Arg-189. FAD contacts are provided by Glu-227, Arg-229, Arg-235, and Glu-609. Positions Arg-790–Ser-811 are disordered.

The protein belongs to the flavin monoamine oxidase family. The cofactor is FAD.

In terms of biological role, probable histone demethylase. The protein is Lysine-specific histone demethylase 1 homolog 3 of Oryza sativa subsp. indica (Rice).